The following is a 299-amino-acid chain: Ribosomal RNA small subunit methyltransferase H (299 aa).

Residues 36–38, Asp55, Phe82, Asp97, and Gln104 contribute to the S-adenosyl-L-methionine site; that span reads GGH.

Belongs to the methyltransferase superfamily. RsmH family.

The protein localises to the cytoplasm. The enzyme catalyses cytidine(1402) in 16S rRNA + S-adenosyl-L-methionine = N(4)-methylcytidine(1402) in 16S rRNA + S-adenosyl-L-homocysteine + H(+). Specifically methylates the N4 position of cytidine in position 1402 (C1402) of 16S rRNA. The sequence is that of Ribosomal RNA small subunit methyltransferase H from Synechococcus sp. (strain RCC307).